A 160-amino-acid polypeptide reads, in one-letter code: MHRPENRADLTPDLTLVRLSHGEGLDLPAYETAGAAGMDLRAAVPADEPMTIRPGARTLVPTGFVFEIPAGHEGQIRPRSGLAFKHGITCLNTPGTVDSDYRGEVKVLLVNLGSDDFVVERGMRIAQMVIAPVTQMAIREADGASTTARGGGGFGSTGLS.

Residues 79-81 (RSG), Asn-92, 96-98 (TVD), and Lys-106 each bind substrate.

Belongs to the dUTPase family. Mg(2+) is required as a cofactor.

The enzyme catalyses dUTP + H2O = dUMP + diphosphate + H(+). Its pathway is pyrimidine metabolism; dUMP biosynthesis; dUMP from dCTP (dUTP route): step 2/2. In terms of biological role, this enzyme is involved in nucleotide metabolism: it produces dUMP, the immediate precursor of thymidine nucleotides and it decreases the intracellular concentration of dUTP so that uracil cannot be incorporated into DNA. This chain is Deoxyuridine 5'-triphosphate nucleotidohydrolase, found in Sinorhizobium medicae (strain WSM419) (Ensifer medicae).